Consider the following 419-residue polypeptide: UDP-N-acetylglucosamine 1-carboxyvinyltransferase (419 aa).

22–23 (KN) is a phosphoenolpyruvate binding site. Arginine 93 contacts UDP-N-acetyl-alpha-D-glucosamine. Cysteine 117 acts as the Proton donor in catalysis. At cysteine 117 the chain carries 2-(S-cysteinyl)pyruvic acid O-phosphothioketal. Aspartate 307 and isoleucine 329 together coordinate UDP-N-acetyl-alpha-D-glucosamine.

The protein belongs to the EPSP synthase family. MurA subfamily.

The protein resides in the cytoplasm. The catalysed reaction is phosphoenolpyruvate + UDP-N-acetyl-alpha-D-glucosamine = UDP-N-acetyl-3-O-(1-carboxyvinyl)-alpha-D-glucosamine + phosphate. The protein operates within cell wall biogenesis; peptidoglycan biosynthesis. In terms of biological role, cell wall formation. Adds enolpyruvyl to UDP-N-acetylglucosamine. The polypeptide is UDP-N-acetylglucosamine 1-carboxyvinyltransferase (Shewanella denitrificans (strain OS217 / ATCC BAA-1090 / DSM 15013)).